The sequence spans 331 residues: Probable endo-beta-1,4-glucanase B (331 aa).

A signal peptide spans 1 to 18 (MKFQSTLLLAAAAGSALA). Asparagine 38 and asparagine 100 each carry an N-linked (GlcNAc...) asparagine glycan. Glutamate 160 acts as the Proton donor in catalysis. The N-linked (GlcNAc...) asparagine glycan is linked to asparagine 211. Glutamate 266 (nucleophile) is an active-site residue. A glycan (N-linked (GlcNAc...) asparagine) is linked at asparagine 288.

It belongs to the glycosyl hydrolase 5 (cellulase A) family.

It is found in the secreted. It carries out the reaction Endohydrolysis of (1-&gt;4)-beta-D-glucosidic linkages in cellulose, lichenin and cereal beta-D-glucans.. In terms of biological role, has endoglucanase activity on substrates containing beta-1,4 glycosidic bonds, like in carboxymethylcellulose (CMC), hydroxyethylcellulose (HEC) and beta-glucan. Involved in the degradation of complex natural cellulosic substrates. The polypeptide is Probable endo-beta-1,4-glucanase B (eglB) (Aspergillus niger (strain ATCC MYA-4892 / CBS 513.88 / FGSC A1513)).